Reading from the N-terminus, the 276-residue chain is Ribonuclease 3 (276 aa).

Positions 30–161 (LTAFIRSLFK…LTGAIYLDRG (132 aa)) constitute an RNase III domain. Residue E74 coordinates Mg(2+). D78 is a catalytic residue. Positions 147 and 150 each coordinate Mg(2+). E150 is a catalytic residue. Residues 188-257 (NHKSRLIEHT…AEEAMGALER (70 aa)) enclose the DRBM domain.

It belongs to the ribonuclease III family. In terms of assembly, homodimer. Requires Mg(2+) as cofactor.

It localises to the cytoplasm. The catalysed reaction is Endonucleolytic cleavage to 5'-phosphomonoester.. Functionally, digests double-stranded RNA. Involved in the processing of primary rRNA transcript to yield the immediate precursors to the large and small rRNAs (23S and 16S). Processes some mRNAs, and tRNAs when they are encoded in the rRNA operon. Processes pre-crRNA and tracrRNA of type II CRISPR loci if present in the organism. The sequence is that of Ribonuclease 3 from Chlorobium luteolum (strain DSM 273 / BCRC 81028 / 2530) (Pelodictyon luteolum).